The following is a 268-amino-acid chain: Ribosomal RNA large subunit methyltransferase E (268 aa).

S-adenosyl-L-methionine contacts are provided by Gly50, Trp52, Asp68, Asp84, and Asp109. Lys149 functions as the Proton acceptor in the catalytic mechanism. A TRAM domain is found at Pro196–Glu254.

Belongs to the class I-like SAM-binding methyltransferase superfamily. RNA methyltransferase RlmE family.

The protein localises to the cytoplasm. It carries out the reaction uridine(2552) in 23S rRNA + S-adenosyl-L-methionine = 2'-O-methyluridine(2552) in 23S rRNA + S-adenosyl-L-homocysteine + H(+). Functionally, specifically methylates the uridine in position 2552 of 23S rRNA at the 2'-O position of the ribose in the fully assembled 50S ribosomal subunit. This is Ribosomal RNA large subunit methyltransferase E from Methanosarcina mazei (strain ATCC BAA-159 / DSM 3647 / Goe1 / Go1 / JCM 11833 / OCM 88) (Methanosarcina frisia).